The sequence spans 245 residues: Protein OXIDATIVE STRESS 3 LIKE 6 (245 aa).

The disordered stretch occupies residues 46 to 90 (QIGIGLRMSNNNNKSPEESSDSSSSIGESSENEEEEEEDDAVSCQ). Over residues 75-86 (SENEEEEEEDDA) the composition is skewed to acidic residues. A Nuclear localization signal motif is present at residues 143 to 151 (NKRRRLVIA). A kinase-inducible domain (KID) region spans residues 203 to 230 (DDHRKIMMMMKNKKELMAQTRSCFCLSS).

It is found in the nucleus. Functionally, probable transcription factor. Promotes slightly the tolerance to cadmium (Cd) and to oxidizing chemicals (e.g. diamide). This chain is Protein OXIDATIVE STRESS 3 LIKE 6, found in Arabidopsis thaliana (Mouse-ear cress).